The primary structure comprises 62 residues: Sperm protamine P1 (62 aa).

Residues methionine 1–tyrosine 62 are disordered.

This sequence belongs to the protamine P1 family. Testis.

The protein localises to the nucleus. It localises to the chromosome. In terms of biological role, protamines substitute for histones in the chromatin of sperm during the haploid phase of spermatogenesis. They compact sperm DNA into a highly condensed, stable and inactive complex. The chain is Sperm protamine P1 (PRM1) from Petrogale xanthopus (Yellow-footed rock wallaby).